Here is an 874-residue protein sequence, read N- to C-terminus: MGVGGGPRVVLCLWCVAALLCQGVAQEVVAETTTPFATHRPEVVAEENPANPFLPFRVCGASPTGGEIFRFPLEESCPNTEDKDHIEGIALIYKTNIVPYVFNVRKYRKIMTSTTIYKGWSEDAITNQHTRSYAVPLYEVQMMDHYYQCFSAVQVNEGGHVNTYYDRDGWNETAFLKPADGLTSSITRYQSQPEVYATPRNLLWSYTTRTTVNCEVTEMSARSMKPFEFFVTSVGDTIEMSPFLKENGTEPEKILKRPHSIQLLKNYAVTKYGVGLGQADNATRFFAIFGDYSLSWKATTENSSYCDLILWKGFSNAIQTQHNSSLHFIANDITASFSTPLEEEANFNETFKCIWNNTQEEIQKKLKEVEKTHRPNGTAKVYKTTGNLYIVWQPLIQIDLLDTHAKLYNLTNATASPTSTPTTSPRRRRRDTSSVSGGGNNGDNSTKEESVAASQVQFAYDNLRKSINRVLGELSRAWCREQYRASLMWYELSKINPTSVMSAIYGRPVSAKLIGDVVSVSDCISVDQKSVFVHKNMKVPGKEDLCYTRPVVGFKFINGSELFAGQLGPRNEIVLSTSQVEVCQHSCEHYFQAGNQMYKYKDYYYVSTLNLTDIPTLHTMITLNLSLVENIDFKVIELYSKTEKRLSNVFDIETMFREYNYYTQNLNGLRKDLDDSIDHGRDSFIQTLGDIMQDLGTIGKVVVNVASGVFSLFGSIVSGVISFFKNPFGGMLLIVLIIAGVVVVYLFMTRSRSIYSAPIRMLYPGVERAAQEPGAHPVSEDQIRNILMGMHQFQQRQRAEEEARREEEVKGKRTLFEVIRDSATSVLRRRRGGGGYQRLQRDGSDDEGDYEPLRRQDGGYDDVDVEAGTADTGV.

Residues 1–25 form the signal peptide; it reads MGVGGGPRVVLCLWCVAALLCQGVA. The Virion surface segment spans residues 26 to 727; that stretch reads QEVVAETTTP…SGVISFFKNP (702 aa). 5 disulfides stabilise this stretch: C59-C523, C77-C479, C149-C214, C306-C353, and C546-C583. Residues 116–122 are involved in fusion and/or binding to host membrane; it reads IYKGWSE. Residue N171 is glycosylated (N-linked (GlcNAc...) asparagine; by host). The tract at residues 200 to 208 is involved in fusion and/or binding to host membrane; the sequence is RNLLWSYTT. 13 N-linked (GlcNAc...) asparagine; by host glycosylation sites follow: N247, N281, N302, N323, N348, N356, N376, N409, N412, N444, N558, N610, and N624. The interval 412–450 is disordered; the sequence is NATASPTSTPTTSPRRRRRDTSSVSGGGNNGDNSTKEES. A hydrophobic membrane proximal region region spans residues 673–725; that stretch reads LDDSIDHGRDSFIQTLGDIMQDLGTIGKVVVNVASGVFSLFGSIVSGVISFFK. The helical transmembrane segment at 728-748 threads the bilayer; that stretch reads FGGMLLIVLIIAGVVVVYLFM. Residues 749-874 are Intravirion-facing; that stretch reads TRSRSIYSAP…VEAGTADTGV (126 aa). The disordered stretch occupies residues 830 to 874; that stretch reads RRGGGGYQRLQRDGSDDEGDYEPLRRQDGGYDDVDVEAGTADTGV. The short motif at 836–839 is the Internalization motif element; it reads YQRL.

This sequence belongs to the herpesviridae glycoprotein B family. In terms of assembly, homotrimer; disulfide-linked. Binds to heparan sulfate proteoglycans. Interacts with gH/gL heterodimer. In terms of processing, a proteolytic cleavage by host furin generates two subunits that remain linked by disulfide bonds.

It is found in the virion membrane. Its subcellular location is the host cell membrane. It localises to the host endosome membrane. The protein resides in the host Golgi apparatus membrane. In terms of biological role, envelope glycoprotein that forms spikes at the surface of virion envelope. Essential for the initial attachment to heparan sulfate moieties of the host cell surface proteoglycans. Involved in fusion of viral and cellular membranes leading to virus entry into the host cell. Following initial binding to its host receptors, membrane fusion is mediated by the fusion machinery composed at least of gB and the heterodimer gH/gL. May be involved in the fusion between the virion envelope and the outer nuclear membrane during virion egress. The sequence is that of Envelope glycoprotein B from Equus caballus (Horse).